The chain runs to 132 residues: Small ribosomal subunit protein eS24 (132 aa).

The segment covering 92 to 101 (LARHGLYEKK) has biased composition (basic and acidic residues). The tract at residues 92–132 (LARHGLYEKKRPTRKQRKERKNRMKKVRGTKKSKVGAAAKK) is disordered. Over residues 102 to 132 (RPTRKQRKERKNRMKKVRGTKKSKVGAAAKK) the composition is skewed to basic residues.

The protein belongs to the eukaryotic ribosomal protein eS24 family.

In Spodoptera frugiperda (Fall armyworm), this protein is Small ribosomal subunit protein eS24 (RpS24).